We begin with the raw amino-acid sequence, 110 residues long: MEIEKTNRMNALFEFYAALLTDKQMNYIELYYADDYSLAEIAEEFGVSRQAVYDNIKRTEKILEDYEMKLHMYSDYIVRSQIFDQILERYPKDDFLQEQIEILTSIDNRE.

This sequence belongs to the UPF0122 family.

Might take part in the signal recognition particle (SRP) pathway. This is inferred from the conservation of its genetic proximity to ftsY/ffh. May be a regulatory protein. This is UPF0122 protein SP70585_1353 from Streptococcus pneumoniae (strain 70585).